The following is a 270-amino-acid chain: NAD kinase (270 aa).

The Proton acceptor role is filled by D45. Residues D45–G46, N121–E122, R147, D149, T160–S165, and A184 contribute to the NAD(+) site.

The protein belongs to the NAD kinase family. The cofactor is a divalent metal cation.

The protein resides in the cytoplasm. The catalysed reaction is NAD(+) + ATP = ADP + NADP(+) + H(+). Its function is as follows. Involved in the regulation of the intracellular balance of NAD and NADP, and is a key enzyme in the biosynthesis of NADP. Catalyzes specifically the phosphorylation on 2'-hydroxyl of the adenosine moiety of NAD to yield NADP. The chain is NAD kinase from Lactobacillus helveticus (strain DPC 4571).